The sequence spans 614 residues: Zinc finger protein 276 (614 aa).

Residues 1–50 (MKRDRLGRFLSPGSSRQCGASDGGGGVSRTRGRPSLSGGPRVDGATARRA) form a disordered region. Residues 77–163 (GHCRLCHGKF…LQRVNASPAG (87 aa)) enclose the ZAD domain. Zn(2+)-binding residues include cysteine 79, cysteine 82, cysteine 136, and cysteine 139. Positions 268 to 420 (APRLPQHRGW…KKPGPKPGWK (153 aa)) are disordered. Residues 357 to 369 (SDLSEGDVLSEDE) are compositionally biased toward acidic residues. Positions 386–408 (YPERKVSGKKSESKEAKKSEEPR) are enriched in basic and acidic residues. Residues 409–420 (IRKKPGPKPGWK) are compositionally biased toward basic residues. 5 C2H2-type zinc fingers span residues 434–458 (YKCP…IKEH), 465–490 (RPCP…KLIH), 496–518 (YICD…QMRH), 524–546 (LQCE…MTKH), and 554–577 (FACD…SMVH). Residues 583-614 (QDKALPLEAEPPPGPPSPSVTTEGQAVKPEPT) are disordered. Residues 591 to 600 (AEPPPGPPSP) are compositionally biased toward pro residues.

It is found in the nucleus. Its subcellular location is the chromosome. The protein resides in the centromere. It localises to the kinetochore. Its function is as follows. May be involved in transcriptional regulation. This is Zinc finger protein 276 (ZNF276) from Homo sapiens (Human).